The sequence spans 122 residues: Large ribosomal subunit protein uL14 (122 aa).

The protein belongs to the universal ribosomal protein uL14 family. Part of the 50S ribosomal subunit. Forms a cluster with proteins L3 and L19. In the 70S ribosome, L14 and L19 interact and together make contacts with the 16S rRNA in bridges B5 and B8.

Its function is as follows. Binds to 23S rRNA. Forms part of two intersubunit bridges in the 70S ribosome. This is Large ribosomal subunit protein uL14 from Azoarcus sp. (strain BH72).